Here is a 175-residue protein sequence, read N- to C-terminus: Coagulogen (175 aa).

8 disulfides stabilise this stretch: Cys-8–Cys-167, Cys-10–Cys-95, Cys-60–Cys-161, Cys-65–Cys-121, Cys-75–Cys-168, Cys-88–Cys-140, Cys-127–Cys-170, and Cys-134–Cys-172.

It belongs to the coagulin family. In terms of assembly, coagulogen is cleaved after Arg-18 and Arg-46 by a clotting enzyme contained in the hemocyte and activated by a bacterial endotoxin (lipopolysaccharide). This cleavage releases the peptide C and leaves 2 chains of coagulin, A and B, linked by two disulfide bonds. Coagulin molecules interlink to form a gel. As to expression, hemolymph.

It is found in the secreted. In terms of biological role, coagulogen is a gel-forming protein of hemolymph; it hinders the spread of invaders by immobilizing them. This is Coagulogen from Carcinoscorpius rotundicauda (Mangrove horseshoe crab).